The sequence spans 310 residues: Upstream stimulatory factor 1 (310 aa).

Over residues 1 to 17 (MKGQQKTAETEEGTVQI) the composition is skewed to polar residues. Disordered regions lie at residues 1-26 (MKGQ…ATGE) and 171-209 (QGGS…EVER). Positions 190-209 (EAPRTTRDEKRRAQHNEVER) are enriched in basic and acidic residues. The 56-residue stretch at 199–254 (KRRAQHNEVERRRRDKINNWIVQLSKIIPDCSMESTKSGQSKGGILSKACDYIQEL) folds into the bHLH domain. Residues 271-292 (LQLDNDVLRQQVEDLKNKNLLL) form a leucine-zipper region. Residue K306 forms a Glycyl lysine isopeptide (Lys-Gly) (interchain with G-Cter in SUMO2) linkage.

Efficient DNA binding requires dimerization with another bHLH protein. Binds DNA as a homodimer or a heterodimer (USF1/USF2). Interacts with varicella-zoster virus IE62 protein.

It is found in the nucleus. Its function is as follows. Transcription factor that binds to a symmetrical DNA sequence (E-boxes) (5'-CACGTG-3') that is found in a variety of viral and cellular promoters. The sequence is that of Upstream stimulatory factor 1 (USF1) from Homo sapiens (Human).